Reading from the N-terminus, the 261-residue chain is Sulfur carrier protein FdhD (261 aa).

Catalysis depends on Cys-105, which acts as the Cysteine persulfide intermediate. A Mo-bis(molybdopterin guanine dinucleotide)-binding site is contributed by 245–250 (FIRGDR).

The protein belongs to the FdhD family.

It localises to the cytoplasm. In terms of biological role, required for formate dehydrogenase (FDH) activity. Acts as a sulfur carrier protein that transfers sulfur from IscS to the molybdenum cofactor prior to its insertion into FDH. In Listeria monocytogenes serotype 4b (strain F2365), this protein is Sulfur carrier protein FdhD.